The primary structure comprises 274 residues: Nitrogenase iron protein (274 aa).

8–15 (GKGGIGKS) contributes to the ATP binding site. Cysteine 94 is a binding site for [4Fe-4S] cluster. Arginine 97 carries the post-translational modification ADP-ribosylarginine; by dinitrogenase reductase ADP-ribosyltransferase. Cysteine 131 serves as a coordination point for [4Fe-4S] cluster.

It belongs to the NifH/BchL/ChlL family. As to quaternary structure, homodimer. The cofactor is [4Fe-4S] cluster. Post-translationally, the reversible ADP-ribosylation of Arg-97 inactivates the nitrogenase reductase and regulates nitrogenase activity.

The catalysed reaction is N2 + 8 reduced [2Fe-2S]-[ferredoxin] + 16 ATP + 16 H2O = H2 + 8 oxidized [2Fe-2S]-[ferredoxin] + 2 NH4(+) + 16 ADP + 16 phosphate + 6 H(+). The key enzymatic reactions in nitrogen fixation are catalyzed by the nitrogenase complex, which has 2 components: the iron protein and the molybdenum-iron protein. In Chlorobium chlorochromatii (strain CaD3), this protein is Nitrogenase iron protein.